The sequence spans 387 residues: Phosphoglycerate kinase (387 aa).

Substrate contacts are provided by residues 21–23 (DLN), Arg-36, 59–62 (HLGR), Arg-113, and Arg-146. Residues Lys-197, Glu-314, and 340–343 (GGDT) contribute to the ATP site.

The protein belongs to the phosphoglycerate kinase family. In terms of assembly, monomer.

It localises to the cytoplasm. The enzyme catalyses (2R)-3-phosphoglycerate + ATP = (2R)-3-phospho-glyceroyl phosphate + ADP. It functions in the pathway carbohydrate degradation; glycolysis; pyruvate from D-glyceraldehyde 3-phosphate: step 2/5. The sequence is that of Phosphoglycerate kinase from Photorhabdus luminescens (Xenorhabdus luminescens).